A 286-amino-acid chain; its full sequence is UDP-3-O-acyl-N-acetylglucosamine deacetylase (286 aa).

Zn(2+)-binding residues include His-81, His-240, and Asp-244. His-266 serves as the catalytic Proton donor.

The protein belongs to the LpxC family. Requires Zn(2+) as cofactor.

The catalysed reaction is a UDP-3-O-[(3R)-3-hydroxyacyl]-N-acetyl-alpha-D-glucosamine + H2O = a UDP-3-O-[(3R)-3-hydroxyacyl]-alpha-D-glucosamine + acetate. Its pathway is glycolipid biosynthesis; lipid IV(A) biosynthesis; lipid IV(A) from (3R)-3-hydroxytetradecanoyl-[acyl-carrier-protein] and UDP-N-acetyl-alpha-D-glucosamine: step 2/6. Catalyzes the hydrolysis of UDP-3-O-myristoyl-N-acetylglucosamine to form UDP-3-O-myristoylglucosamine and acetate, the committed step in lipid A biosynthesis. The chain is UDP-3-O-acyl-N-acetylglucosamine deacetylase from Francisella tularensis subsp. tularensis (strain FSC 198).